The chain runs to 1102 residues: MSSFRLQSDHMQSDASLMTSVRKATSIDETAPKRKHVRSCIIFTWDHHTARPFWTAIKVQPLLANEVQTFKALITIHRVLQEGHKSALVDSQSEKGWLKTCERQYDGESSPKGYSDLIRDYVDYLLDKLSFHAQHPEFNGTFEYKEYISLRQVDDPNEGYETVYDMMNLQDHIDEFQKQLFSNFKRSNKNECRIAALVPLVQESYGIYRFLTSMLRALYSTVDAPETLEPLKHRYKSQHHRLRQFYADCSNLRYLTSLISVPRLPHDPPDLEGDDNIPDLPKRPASIAPQPTGASTIAPQPTGTSPSPPVEMNFPDTSDITPAYSEPEPIQDFWSDPTLDQQLAAQQAAQQAAQQQAELAAQQAAAQQAQLAAQQAAEMERQRMAAQQHQQALEAIQMAQAEQQRIAQEQLAQQQFQMQTQGQLAELEQQLLATRGQLEQSNVLLNQYDARVRTLENELSQAGVNLQEQIHQNDDLIESLKNQILTWKNKYEALAKLYTQLRQEHLDLLSKYKQIQLKASSAQEAIDKKEKMEREMKNKNLELADMILERDRARHELETMHRSQRDKQESTERELRLLQEKAASLERNKSSEVSNLLSRYNTEVAHLEDALHSKDRELANLGVELKSTENRYRQLLQEKEEELEIQKAAVDESLLQLSKLQLDRNDIDQAMDTQIDELLKSQLEKLDDIVDSVLATGIQRLDTSLYELDSPMHAGNQYATPEFILSTIENASNNATDFSTAFNNYFADGPNADHSEVINGVNLFSTAIYEVANNAKGLSRTTGDDQGSDRFVGLSRDLVNMAKRFLSSLFSVNTRKMDVNVKTDLVIGENIELQRYLQQLTQYSEKFLNKESENTVGLLNAPGENIEELVDNQLAETAQAIQQAILRLQNIAAKPKDDSLSPSELQVHDSLLSASIAITEAIARLIKAATASQAEIVAQGRGSSSRGAFYKKHNRWTEGLISAAKAVARATTTLIETADGVVNGTSSFEHLIVACNGVSAATAQLVAASRVKANFASKVQDHLEDAAKAVTEACKALVRQVESVALKAKEVQHEDFSSLGVHEYRRKEIEQQVQILKLENDLVAARRRLFDMRKTSYHVAEE.

One can recognise an ENTH domain in the interval aspartate 9–asparagine 139. Positions proline 265–tryptophan 334 are disordered. Polar residues predominate over residues threonine 292–serine 305. A coiled-coil region spans residues threonine 338–glutamine 661. An I/LWEQ domain is found at leucine 858–alanine 1100.

The protein belongs to the SLA2 family.

Its subcellular location is the cytoplasm. It localises to the cytoskeleton. Its function is as follows. Required for cellular morphogenesis and polarization of the cortical cytoskeleton. Required for establishment of new polarized growth zones where it acts in actin organization. Involved plasma membrane internalization and is essential for fluid-phase endocytosis. In Schizosaccharomyces pombe (strain 972 / ATCC 24843) (Fission yeast), this protein is Endocytosis protein end4 (end4).